The following is a 268-amino-acid chain: Small ribosomal subunit protein uS2 (268 aa).

This sequence belongs to the universal ribosomal protein uS2 family.

This chain is Small ribosomal subunit protein uS2, found in Caulobacter vibrioides (strain ATCC 19089 / CIP 103742 / CB 15) (Caulobacter crescentus).